A 1082-amino-acid polypeptide reads, in one-letter code: Putative white-brown complex homolog protein 30 (1082 aa).

Transmembrane regions (helical) follow at residues 12–32 (HIFLFFVFGLSFMSFALSLDG) and 292–312 (NIHAYGAILIASLSLLMIMVY). The segment covering 329 to 348 (SREAAARHAKETTQARERWK) has biased composition (basic and acidic residues). The disordered stretch occupies residues 329–437 (SREAAARHAK…QAPKGKQLHT (109 aa)). An ABC transporter domain is found at 484-726 (VAFKDLTLTL…FADIGITVPD (243 aa)). 518 to 525 (GPSGAGKT) lines the ATP pocket. The ABC transmembrane type-2 domain maps to 832–1029 (RQYRYFVGRV…TLEAFVLSNA (198 aa)). Transmembrane regions (helical) follow at residues 853 to 873 (ALDFLILLVAGACLGTLAKVN), 877 to 897 (IDTLGYTYTIIAVSLLCKISA), 958 to 978 (YIVLVCLVYCVTGMAYIFAIL), 979 to 999 (YSPSAAQLLSVLVPVVMTLIA), and 1054 to 1074 (WILCLIVLVLMGLICRFIAYF).

Belongs to the ABC transporter superfamily. ABCG family. Eye pigment precursor importer (TC 3.A.1.204) subfamily.

The protein localises to the membrane. The chain is Putative white-brown complex homolog protein 30 (WBC30) from Arabidopsis thaliana (Mouse-ear cress).